Here is a 238-residue protein sequence, read N- to C-terminus: MSSRSYKRVLLKLSGEALMGDDAFGINRSTIVRMTDEIAEVAAMGVELAIVIGGGNIFRGVAPGAQGMDRATADYMGMMATIMNALALQDALKHKGLDTRVQSALNIDQVVEPYIRPKTLRYLEEGKVVIFAAGTGNPFFTTDTAAALRGAEIGAEIVLKATKVDGIYSADPNKDPTATRYARISFDEAIVRRLEVMDATAFALCRDQKLPIKVFSINKSGALKRVVGGEDEGTLVHV.

Position 12-15 (12-15 (KLSG)) interacts with ATP. Residue glycine 54 participates in UMP binding. Glycine 55 and arginine 59 together coordinate ATP. UMP contacts are provided by residues aspartate 74 and 135 to 142 (TGNPFFTT). The ATP site is built by threonine 162, tyrosine 168, and aspartate 171.

This sequence belongs to the UMP kinase family. In terms of assembly, homohexamer.

The protein localises to the cytoplasm. The enzyme catalyses UMP + ATP = UDP + ADP. Its pathway is pyrimidine metabolism; CTP biosynthesis via de novo pathway; UDP from UMP (UMPK route): step 1/1. With respect to regulation, inhibited by UTP. Catalyzes the reversible phosphorylation of UMP to UDP. The polypeptide is Uridylate kinase (Bordetella avium (strain 197N)).